The primary structure comprises 32 residues: DNA-binding protein HU (32 aa).

It belongs to the bacterial histone-like protein family.

In terms of biological role, histone-like DNA-binding protein which is capable of wrapping DNA to stabilize it, and thus to prevent its denaturation under extreme environmental conditions. This Synechocystis sp. (strain PCC 6701) protein is DNA-binding protein HU (hup).